The chain runs to 37 residues: Large ribosomal subunit protein bL36A (37 aa).

The protein belongs to the bacterial ribosomal protein bL36 family.

The polypeptide is Large ribosomal subunit protein bL36A (Clavibacter sepedonicus (Clavibacter michiganensis subsp. sepedonicus)).